A 280-amino-acid chain; its full sequence is Ribonuclease Z (280 aa).

The Zn(2+) site is built by H61, H63, D65, H66, H153, D176, and H240. D65 acts as the Proton acceptor in catalysis.

Belongs to the RNase Z family. In terms of assembly, homodimer. Zn(2+) serves as cofactor.

It carries out the reaction Endonucleolytic cleavage of RNA, removing extra 3' nucleotides from tRNA precursor, generating 3' termini of tRNAs. A 3'-hydroxy group is left at the tRNA terminus and a 5'-phosphoryl group is left at the trailer molecule.. Zinc phosphodiesterase, which displays some tRNA 3'-processing endonuclease activity. Probably involved in tRNA maturation, by removing a 3'-trailer from precursor tRNA. This Mycobacterium bovis (strain BCG / Pasteur 1173P2) protein is Ribonuclease Z.